The following is a 234-amino-acid chain: Demethylmenaquinone methyltransferase (234 aa).

Residues T58, D79, and 106–107 (NA) each bind S-adenosyl-L-methionine.

It belongs to the class I-like SAM-binding methyltransferase superfamily. MenG/UbiE family.

It catalyses the reaction a 2-demethylmenaquinol + S-adenosyl-L-methionine = a menaquinol + S-adenosyl-L-homocysteine + H(+). It participates in quinol/quinone metabolism; menaquinone biosynthesis; menaquinol from 1,4-dihydroxy-2-naphthoate: step 2/2. In terms of biological role, methyltransferase required for the conversion of demethylmenaquinol (DMKH2) to menaquinol (MKH2). This chain is Demethylmenaquinone methyltransferase, found in Geobacillus kaustophilus (strain HTA426).